A 428-amino-acid chain; its full sequence is Tyrosine--tRNA ligase (428 aa).

Y41 contacts L-tyrosine. A 'HIGH' region motif is present at residues 46-55 (PTADSLHLGH). Y179 and Q183 together coordinate L-tyrosine. The short motif at 239–243 (KFGKT) is the 'KMSKS' region element. K242 serves as a coordination point for ATP. The S4 RNA-binding domain occupies 361 to 418 (ADLMQALVDAELQPSRGQARKTIASNAVTINGEKQSDPEYIFNDEDRLFGRYTLLRRG).

The protein belongs to the class-I aminoacyl-tRNA synthetase family. TyrS type 1 subfamily. In terms of assembly, homodimer.

Its subcellular location is the cytoplasm. It carries out the reaction tRNA(Tyr) + L-tyrosine + ATP = L-tyrosyl-tRNA(Tyr) + AMP + diphosphate + H(+). Functionally, catalyzes the attachment of tyrosine to tRNA(Tyr) in a two-step reaction: tyrosine is first activated by ATP to form Tyr-AMP and then transferred to the acceptor end of tRNA(Tyr). The sequence is that of Tyrosine--tRNA ligase from Salmonella paratyphi C (strain RKS4594).